Reading from the N-terminus, the 361-residue chain is F-box protein pof7 (361 aa).

In terms of domain architecture, F-box spans 105–157; the sequence is NESVVPNILKLPDEVLLVILENCIRDLHDLRYLSSIALTCKHFAKALRADSLY.

As to quaternary structure, interacts with skp1.

It localises to the cytoplasm. The protein is F-box protein pof7 (pof7) of Schizosaccharomyces pombe (strain 972 / ATCC 24843) (Fission yeast).